Consider the following 2237-residue polypeptide: Activating signal cointegrator 1 complex subunit 3-like (2237 aa).

Disordered stretches follow at residues 1–48 (MSEE…RGEM), 71–118 (TIEK…KPID), 242–330 (DEEE…SKLI), and 445–472 (EKTI…DEIK). The span at 24–37 (ERNRSELKEPKGEP) shows a compositional bias: basic and acidic residues. Residues 79-97 (VNSSNDTYSTTKKVKNQNP) show a composition bias toward polar residues. Low complexity predominate over residues 105 to 114 (RKSNGNNNNE). Over residues 242–282 (DEEEEEENLSDFEIRDDDDDDDDVDNNEVDDNNNNDSEAQD) the composition is skewed to acidic residues. Basic and acidic residues-rich tracts occupy residues 312 to 325 (QKPD…DKNN) and 446 to 460 (KTIE…DVEM). The stretch at 440–468 (TAATTEKTIEKTESNKKDVEMKQQQQQQQ) forms a coiled coil. The Helicase ATP-binding 1 domain maps to 561–745 (DCAFKTDNNL…FLRVEPDGVF (185 aa)). An ATP-binding site is contributed by 574 to 581 (APTSSGKT). Positions 687–690 (DEIH) match the DEAH box motif. The Helicase C-terminal 1 domain maps to 755–990 (PLEQQYIGIS…TVRDAVNWLG (236 aa)). Residues 1050 to 1356 (STELGKVASH…GAEYSLPISF (307 aa)) enclose the SEC63 1 domain. The 178-residue stretch at 1407-1584 (NCMYQSNDNA…WIGATPQTCY (178 aa)) folds into the Helicase ATP-binding 2 domain. Position 1420-1427 (1420-1427 (APTNSGKT)) interacts with ATP. The short motif at 1526-1529 (DELH) is the DEAH box element. One can recognise a Helicase C-terminal 2 domain in the interval 1657–1832 (TLTKPYLVCE…TITKKQDALD (176 aa)). The region spanning 1892 to 2215 (PLNLGIIASY…GCDQEHELNI (324 aa)) is the SEC63 2 domain.

Belongs to the helicase family.

This chain is Activating signal cointegrator 1 complex subunit 3-like (ascc3l), found in Dictyostelium discoideum (Social amoeba).